We begin with the raw amino-acid sequence, 1028 residues long: Ubiquitin conjugation factor E4 A (1028 aa).

Positions 33–57 (KEQLKQQSDELPASPDDSDNSVSES) are disordered. Lys-386 carries the N6-acetyllysine modification. One can recognise a U-box domain in the interval 949-1023 (DACDEFLDPI…QRWLAERKQQ (75 aa)).

Belongs to the ubiquitin conjugation factor E4 family. In terms of tissue distribution, expressed in liver, heart, brain, kidney and testis.

It localises to the cytoplasm. The catalysed reaction is S-ubiquitinyl-[E2 ubiquitin-conjugating enzyme]-L-cysteine + [acceptor protein]-L-lysine = [E2 ubiquitin-conjugating enzyme]-L-cysteine + N(6)-ubiquitinyl-[acceptor protein]-L-lysine.. It functions in the pathway protein modification; protein ubiquitination. Functionally, ubiquitin-protein ligase that probably functions as an E3 ligase in conjunction with specific E1 and E2 ligases. May also function as an E4 ligase mediating the assembly of polyubiquitin chains on substrates ubiquitinated by another E3 ubiquitin ligase. Mediates 'Lys-48'-linked polyubiquitination of substrates. This is Ubiquitin conjugation factor E4 A from Mus musculus (Mouse).